We begin with the raw amino-acid sequence, 59 residues long: Protein translocase subunit SecE (59 aa).

The chain crosses the membrane as a helical span at residues 37–57; it reads LIVLLFVGLLAFLVQLAFSIL.

This sequence belongs to the SecE/SEC61-gamma family. Component of the Sec protein translocase complex. Heterotrimer consisting of SecY (alpha), SecG (beta) and SecE (gamma) subunits. The heterotrimers can form oligomers, although 1 heterotrimer is thought to be able to translocate proteins. Interacts with the ribosome. May interact with SecDF, and other proteins may be involved.

The protein resides in the cell membrane. In terms of biological role, essential subunit of the Sec protein translocation channel SecYEG. Clamps together the 2 halves of SecY. May contact the channel plug during translocation. This is Protein translocase subunit SecE from Metallosphaera sedula (strain ATCC 51363 / DSM 5348 / JCM 9185 / NBRC 15509 / TH2).